Reading from the N-terminus, the 210-residue chain is Inner membrane-spanning protein YciB (210 aa).

The next 6 helical transmembrane spans lie at 12–32, 53–73, 78–98, 115–135, 148–168, and 175–195; these read EVSP…FFFA, IFIA…ASWI, LPMM…LTLW, LFGA…GYVF, KLTI…EVIW, and FWVA…TLAQ.

It belongs to the YciB family.

The protein resides in the cell inner membrane. In terms of biological role, plays a role in cell envelope biogenesis, maintenance of cell envelope integrity and membrane homeostasis. The protein is Inner membrane-spanning protein YciB of Rhizobium meliloti (strain 1021) (Ensifer meliloti).